Consider the following 716-residue polypeptide: Calpain-1 catalytic subunit (716 aa).

The 300-residue stretch at Leu55–Thr354 folds into the Calpain catalytic domain. The Ca(2+) site is built by Gln109 and Asp114. Catalysis depends on residues Cys115, His272, and Asn296. Positions 318 and 323 each coordinate Ca(2+). Thr354 carries the phosphothreonine modification. The domain III stretch occupies residues Pro355–Asp528. A linker region spans residues Gln529 to Glu544. 4 EF-hand domains span residues Glu543 to Lys578, Phe587 to Arg620, Asn617 to Lys652, and Val682 to Ala716. The domain IV stretch occupies residues Ile545–Phe715. Ca(2+) is bound by residues Asp600, Asp602, Asn604, Lys606, Glu611, Asp630, Asp632, Ser634, Ser636, and Glu641.

This sequence belongs to the peptidase C2 family. Forms a heterodimer with a small (regulatory) subunit CAPNS1. Ca(2+) serves as cofactor. Undergoes calcium-induced successive autoproteolytic cleavages that generate a membrane-bound 78 kDa active form and an intracellular 75 kDa active form. Calpastatin reduces with high efficiency the transition from 78 kDa to 75 kDa calpain forms.

The protein localises to the cytoplasm. Its subcellular location is the cell membrane. It carries out the reaction Broad endopeptidase specificity.. Its activity is regulated as follows. Activated by micromolar concentrations of calcium and inhibited by calpastatin. Calcium-regulated non-lysosomal thiol-protease which catalyzes limited proteolysis of substrates involved in cytoskeletal remodeling and signal transduction. Proteolytically cleaves CTBP1. Cleaves and activates caspase-7 (CASP7). The polypeptide is Calpain-1 catalytic subunit (Bos taurus (Bovine)).